We begin with the raw amino-acid sequence, 62 residues long: UPF0434 protein RSc2531 (62 aa).

It belongs to the UPF0434 family.

The protein is UPF0434 protein RSc2531 of Ralstonia nicotianae (strain ATCC BAA-1114 / GMI1000) (Ralstonia solanacearum).